The following is a 157-amino-acid chain: MTNTETAVFGMGCFWSAEELFRKIKGVISTEVGFMGGTVKNPTYGQVCRGKSGHIEVVNITYNPKIVKYTDLLNLFWNNHDPTTPNRQGWDVGEQYSSHIFYFTEEQRLLAEKSFEKIQKSSDLRIVTAIKKASDFFPAEEYHQKYFMKKNNSILNF.

Residue Cys-13 is part of the active site.

The protein belongs to the MsrA Met sulfoxide reductase family.

It catalyses the reaction L-methionyl-[protein] + [thioredoxin]-disulfide + H2O = L-methionyl-(S)-S-oxide-[protein] + [thioredoxin]-dithiol. It carries out the reaction [thioredoxin]-disulfide + L-methionine + H2O = L-methionine (S)-S-oxide + [thioredoxin]-dithiol. Has an important function as a repair enzyme for proteins that have been inactivated by oxidation. Catalyzes the reversible oxidation-reduction of methionine sulfoxide in proteins to methionine. The sequence is that of Peptide methionine sulfoxide reductase MsrA from Methanococcus maripaludis (strain C5 / ATCC BAA-1333).